Consider the following 172-residue polypeptide: R-phycocyanin beta chain (172 aa).

Positions 35 and 39 each coordinate (2R,3E)-phycoerythrobilin. Residues Asn-72, Cys-82, and 84–85 (RD) contribute to the (2R,3E)-phycocyanobilin site. Asn-72 is modified (N4-methylasparagine). (2R,3E)-phycoerythrobilin-binding positions include 149 to 151 (PAG) and Cys-153.

Belongs to the phycobiliprotein family. As to quaternary structure, heterododecamer of 6 alpha and 6 beta chains. The basic functional unit of phycobiliproteins is a ring-shaped hexamer formed from two back-to-back trimers contacting via the alpha chain subunits. The trimers are composed of alpha/beta subunit heterodimers arranged around a three-fold axis of symmetry. The phycoerythrins also contain a gamma subunit which is located in the center of the hexamer. In terms of processing, contains one covalently linked phycocyanobilin chromophore and one covalently linked phycoerythrobilin chromophore.

Its subcellular location is the plastid. The protein resides in the chloroplast thylakoid membrane. Light-harvesting photosynthetic tetrapyrrole chromophore-protein from the phycobiliprotein complex (phycobilisome, PBS). Phycocyanin is the major phycobiliprotein in the PBS rod. The polypeptide is R-phycocyanin beta chain (rpcB) (Polysiphonia urceolata (Red alga)).